A 1096-amino-acid polypeptide reads, in one-letter code: Constitutive coactivator of PPAR-gamma-like protein 2 (1096 aa).

A compositionally biased stretch (low complexity) spans 35–59; that stretch reads QQQHLHRQLPPTAALAPGAPRAARG. Disordered stretches follow at residues 35-113, 508-579, and 971-1096; these read QQQH…PPQL, NYLP…DGEP, and SRSS…RKED. Arg58 is subject to Omega-N-methylarginine. The segment covering 82–95 has biased composition (basic residues); the sequence is TRHHHPAHHFHHHG. Residues 101 to 113 show a composition bias toward pro residues; the sequence is LHPPLPPPPPPQL. The segment covering 540 to 559 has biased composition (basic and acidic residues); it reads HITEAFHHQPEWGNPNRDRG. Arg977 is subject to Omega-N-methylarginine. 2 stretches are compositionally biased toward basic and acidic residues: residues 1041 to 1050 and 1076 to 1096; these read IKEEKSDHRL and NREK…RKED. Lys1042 participates in a covalent cross-link: Glycyl lysine isopeptide (Lys-Gly) (interchain with G-Cter in SUMO2).

It belongs to the constitutive coactivator of PPAR-gamma family. In terms of tissue distribution, expressed at low levels in a number of tissues.

The sequence is that of Constitutive coactivator of PPAR-gamma-like protein 2 (FAM120C) from Homo sapiens (Human).